The following is a 147-amino-acid chain: Fibromodulin (147 aa).

LRR repeat units lie at residues 1–15, 16–37, 40–61, 63–84, 85–105, and 108–128; these read LDHN…PLPR, SLRE…ALEG, NLTA…MRGL, SLIL…LPSA, LEQL…YFRG, and KLLY…ASNT. An N-linked (GlcNAc...) asparagine glycan is attached at Asn5. Asn40 carries an N-linked (GlcNAc...) asparagine glycan. A glycan (N-linked (GlcNAc...) asparagine) is linked at Asn130. The LRR 7 repeat unit spans residues 133–147; the sequence is SLLELDLSYNQLQKI.

The protein belongs to the small leucine-rich proteoglycan (SLRP) family. SLRP class II subfamily. In terms of assembly, binds to type I and type II collagen. Binds keratan sulfate chains. In terms of processing, sulfated on tyrosine residues. Post-translationally, the N-terminus is blocked by a pyrrolidone carboxylic acid generated by post-translational modification of N-terminal glutamine.

The protein resides in the secreted. It localises to the extracellular space. It is found in the extracellular matrix. In terms of biological role, affects the rate of fibrils formation. May have a primary role in collagen fibrillogenesis. In Oryctolagus cuniculus (Rabbit), this protein is Fibromodulin (FMOD).